Reading from the N-terminus, the 210-residue chain is Outer-membrane lipoprotein LolB (210 aa).

The first 26 residues, 1-26 (MSKLKIDTKRRFSLLIALVLIISLSS), serve as a signal peptide directing secretion. Cys-27 carries the N-palmitoyl cysteine lipid modification. Cys-27 is lipidated: S-diacylglycerol cysteine.

This sequence belongs to the LolB family. As to quaternary structure, monomer.

Its subcellular location is the cell outer membrane. Its function is as follows. Plays a critical role in the incorporation of lipoproteins in the outer membrane after they are released by the LolA protein. In Francisella tularensis subsp. holarctica (strain FTNF002-00 / FTA), this protein is Outer-membrane lipoprotein LolB.